A 62-amino-acid chain; its full sequence is Photosystem II reaction center protein Z (62 aa).

A run of 2 helical transmembrane segments spans residues 8–28 (TLFA…VVFA) and 41–61 (FSGI…NSFV).

This sequence belongs to the PsbZ family. As to quaternary structure, PSII is composed of 1 copy each of membrane proteins PsbA, PsbB, PsbC, PsbD, PsbE, PsbF, PsbH, PsbI, PsbJ, PsbK, PsbL, PsbM, PsbT, PsbY, PsbZ, Psb30/Ycf12, at least 3 peripheral proteins of the oxygen-evolving complex and a large number of cofactors. It forms dimeric complexes.

It is found in the plastid. Its subcellular location is the chloroplast thylakoid membrane. May control the interaction of photosystem II (PSII) cores with the light-harvesting antenna, regulates electron flow through the 2 photosystem reaction centers. PSII is a light-driven water plastoquinone oxidoreductase, using light energy to abstract electrons from H(2)O, generating a proton gradient subsequently used for ATP formation. The chain is Photosystem II reaction center protein Z from Tupiella akineta (Green alga).